The chain runs to 140 residues: Putative esterase SSO2140 (140 aa).

The protein belongs to the thioesterase PaaI family.

This Saccharolobus solfataricus (strain ATCC 35092 / DSM 1617 / JCM 11322 / P2) (Sulfolobus solfataricus) protein is Putative esterase SSO2140.